Consider the following 73-residue polypeptide: Structural DNA-binding protein p10 (73 aa).

The disordered stretch occupies residues 1–35 (MPTKAGTKSTAHKKTTTKGPSKSPKGKTHATALHQ).

This sequence belongs to the asfivirus P10 family.

The protein localises to the virion. May play a role in genome packaging through direct interaction with viral DNA. Binds to ssDNA and dsDNA with the same apparent affinity in vitro. This is Structural DNA-binding protein p10 from African swine fever virus (isolate Tick/Malawi/Lil 20-1/1983) (ASFV).